The chain runs to 323 residues: Cell division protein ZipA (323 aa).

The Periplasmic portion of the chain corresponds to 1-4 (MDLN). A helical transmembrane segment spans residues 5-25 (TILIILGIIALIILVVHGLWA). Residues 26–323 (NRREKSQYFK…AEKAYLDKVR (298 aa)) are Cytoplasmic-facing. The disordered stretch occupies residues 44–73 (SRLREPPAHIQSASEEKKDANTSTPTAEVS).

This sequence belongs to the ZipA family. Interacts with FtsZ via their C-terminal domains.

It localises to the cell inner membrane. Functionally, essential cell division protein that stabilizes the FtsZ protofilaments by cross-linking them and that serves as a cytoplasmic membrane anchor for the Z ring. Also required for the recruitment to the septal ring of downstream cell division proteins. This is Cell division protein ZipA from Pasteurella multocida (strain Pm70).